We begin with the raw amino-acid sequence, 386 residues long: Succinyl-diaminopimelate desuccinylase (386 aa).

A Zn(2+)-binding site is contributed by His77. Residue Asp79 is part of the active site. A Zn(2+)-binding site is contributed by Asp110. Glu144 functions as the Proton acceptor in the catalytic mechanism. 3 residues coordinate Zn(2+): Glu145, Glu173, and His359.

The protein belongs to the peptidase M20A family. DapE subfamily. In terms of assembly, homodimer. Zn(2+) serves as cofactor. It depends on Co(2+) as a cofactor.

The catalysed reaction is N-succinyl-(2S,6S)-2,6-diaminopimelate + H2O = (2S,6S)-2,6-diaminopimelate + succinate. Its pathway is amino-acid biosynthesis; L-lysine biosynthesis via DAP pathway; LL-2,6-diaminopimelate from (S)-tetrahydrodipicolinate (succinylase route): step 3/3. Functionally, catalyzes the hydrolysis of N-succinyl-L,L-diaminopimelic acid (SDAP), forming succinate and LL-2,6-diaminopimelate (DAP), an intermediate involved in the bacterial biosynthesis of lysine and meso-diaminopimelic acid, an essential component of bacterial cell walls. The chain is Succinyl-diaminopimelate desuccinylase from Ralstonia pickettii (strain 12J).